A 520-amino-acid polypeptide reads, in one-letter code: Amine oxidase [flavin-containing] B (520 aa).

At 1 to 489 the chain is on the cytoplasmic side; that stretch reads MNSKCDVVVV…TFLERHLPSV (489 aa). An N6-acetyllysine modification is found at Lys-52. Cys-397 is modified (S-8alpha-FAD cysteine). A helical; Anchor for type IV membrane protein transmembrane segment spans residues 490–516; sequence PGLLRLIRLTTVVSAVALGFLAQKRGL. The Mitochondrial intermembrane segment spans residues 517–520; it reads LLRI.

This sequence belongs to the flavin monoamine oxidase family. As to quaternary structure, monomer, homo- or heterodimer (containing two subunits of similar size). Each subunit contains a covalently bound flavin. Enzymatically active as monomer. FAD serves as cofactor.

The protein localises to the mitochondrion outer membrane. It catalyses the reaction a secondary aliphatic amine + O2 + H2O = a primary amine + an aldehyde + H2O2. The enzyme catalyses (R)-adrenaline + O2 + H2O = (R)-3,4-dihydroxymandelaldehyde + methylamine + H2O2. The catalysed reaction is a primary methyl amine + O2 + H2O = an aldehyde + H2O2 + NH4(+). It carries out the reaction benzylamine + O2 + H2O = benzaldehyde + H2O2 + NH4(+). It catalyses the reaction dopamine + O2 + H2O = 3,4-dihydroxyphenylacetaldehyde + H2O2 + NH4(+). The enzyme catalyses tyramine + O2 + H2O = (4-hydroxyphenyl)acetaldehyde + H2O2 + NH4(+). The catalysed reaction is (R)-noradrenaline + O2 + H2O = (R)-3,4-dihydroxymandelaldehyde + H2O2 + NH4(+). It carries out the reaction 2-phenylethylamine + O2 + H2O = 2-phenylacetaldehyde + H2O2 + NH4(+). It catalyses the reaction N-acetylputrescine + O2 + H2O = 4-acetamidobutanal + H2O2 + NH4(+). Functionally, catalyzes the oxidative deamination of primary and some secondary amines such as neurotransmitters, and exogenous amines including the tertiary amine, neurotoxin 1-methyl-4-phenyl-1,2,3,6-tetrahydropyridine (MPTP), with concomitant reduction of oxygen to hydrogen peroxide and participates in the metabolism of neuroactive and vasoactive amines in the central nervous system and peripheral tissues. Preferentially degrades benzylamine and phenylethylamine. In Cavia porcellus (Guinea pig), this protein is Amine oxidase [flavin-containing] B.